Reading from the N-terminus, the 182-residue chain is Large ribosomal subunit protein uL16 (182 aa).

It belongs to the universal ribosomal protein uL16 family.

The sequence is that of Large ribosomal subunit protein uL16 from Pyrobaculum neutrophilum (strain DSM 2338 / JCM 9278 / NBRC 100436 / V24Sta) (Thermoproteus neutrophilus).